Here is a 168-residue protein sequence, read N- to C-terminus: DNA damage-inducible transcript 3 protein (168 aa).

Positions 10–18 are interaction with TRIB3; sequence LETVSSWEL. Residues 10-26 form an N-terminal region; it reads LETVSSWELEAWYEDLQ. A phosphoserine; by CK2 mark is found at Ser14, Ser15, Ser30, and Ser31. The segment covering 30 to 43 has biased composition (polar residues); that stretch reads SSDENGGPYSSSLG. The disordered stretch occupies residues 30-168; sequence SSDENGGPYS…DRPHVNLQQV (139 aa). Over residues 74–87 the composition is skewed to low complexity; the sequence is SSSQSPRSPDSSQS. Residues Ser78 and Ser81 each carry the phosphoserine; by MAPK14 modification. Positions 98–161 constitute a bZIP domain; sequence GRTRKRKQSG…EATRPGSDRP (64 aa). Residues 101–129 form a basic motif region; sequence RKRKQSGQCPARGTGKQRMKEKEQENERK. Residues 118–162 show a composition bias toward basic and acidic residues; that stretch reads RMKEKEQENERKVAQLAEENERLKQEIERLTREVEATRPGSDRPH. The leucine-zipper stretch occupies residues 133–147; that stretch reads LAEENERLKQEIERL.

The protein belongs to the bZIP family. Heterodimer. Interacts with TCF7L2/TCF4, EP300/P300, HDAC1, HDAC5 and HDAC6. Interacts with TRIB3 which blocks its association with EP300/P300. Interacts with FOXO3, CEBPB and ATF4. Post-translationally, ubiquitinated, leading to its degradation by the proteasome. Phosphorylation at serine residues by MAPK14 enhances its transcriptional activation activity while phosphorylation at serine residues by CK2 inhibits its transcriptional activation activity.

The protein resides in the cytoplasm. Its subcellular location is the nucleus. Multifunctional transcription factor in ER stress response. Plays an essential role in the response to a wide variety of cell stresses and induces cell cycle arrest and apoptosis in response to ER stress. Plays a dual role both as an inhibitor of CCAAT/enhancer-binding protein (C/EBP) function and as an activator of other genes. Acts as a dominant-negative regulator of C/EBP-induced transcription: dimerizes with members of the C/EBP family, impairs their association with C/EBP binding sites in the promoter regions, and inhibits the expression of C/EBP regulated genes. Positively regulates the transcription of TRIB3, IL6, IL8, IL23, TNFRSF10B/DR5, PPP1R15A/GADD34, BBC3/PUMA, BCL2L11/BIM and ERO1L. Negatively regulates; expression of BCL2 and MYOD1, ATF4-dependent transcriptional activation of asparagine synthetase (ASNS), CEBPA-dependent transcriptional activation of hepcidin (HAMP) and CEBPB-mediated expression of peroxisome proliferator-activated receptor gamma (PPARG). Inhibits the canonical Wnt signaling pathway by binding to TCF7L2/TCF4, impairing its DNA-binding properties and repressing its transcriptional activity. Plays a regulatory role in the inflammatory response through the induction of caspase-11 (CASP4/CASP11) which induces the activation of caspase-1 (CASP1) and both these caspases increase the activation of pro-IL1B to mature IL1B which is involved in the inflammatory response. In Cricetulus griseus (Chinese hamster), this protein is DNA damage-inducible transcript 3 protein (DDIT3).